A 267-amino-acid chain; its full sequence is Glucosamine-6-phosphate deaminase (267 aa).

Asp72 (proton acceptor; for enolization step) is an active-site residue. Asp141 (for ring-opening step) is an active-site residue. The Proton acceptor; for ring-opening step role is filled by His143. Catalysis depends on Glu148, which acts as the For ring-opening step.

This sequence belongs to the glucosamine/galactosamine-6-phosphate isomerase family. NagB subfamily. Homohexamer.

The catalysed reaction is alpha-D-glucosamine 6-phosphate + H2O = beta-D-fructose 6-phosphate + NH4(+). Its pathway is amino-sugar metabolism; N-acetylneuraminate degradation; D-fructose 6-phosphate from N-acetylneuraminate: step 5/5. With respect to regulation, allosterically activated by N-acetylglucosamine 6-phosphate (GlcNAc6P). In terms of biological role, catalyzes the reversible isomerization-deamination of glucosamine 6-phosphate (GlcN6P) to form fructose 6-phosphate (Fru6P) and ammonium ion. The protein is Glucosamine-6-phosphate deaminase of Haemophilus ducreyi (strain 35000HP / ATCC 700724).